We begin with the raw amino-acid sequence, 260 residues long: Imidazole glycerol phosphate synthase subunit HisF (260 aa).

Residues D11 and D130 contribute to the active site.

Belongs to the HisA/HisF family. Heterodimer of HisH and HisF.

The protein resides in the cytoplasm. The catalysed reaction is 5-[(5-phospho-1-deoxy-D-ribulos-1-ylimino)methylamino]-1-(5-phospho-beta-D-ribosyl)imidazole-4-carboxamide + L-glutamine = D-erythro-1-(imidazol-4-yl)glycerol 3-phosphate + 5-amino-1-(5-phospho-beta-D-ribosyl)imidazole-4-carboxamide + L-glutamate + H(+). It functions in the pathway amino-acid biosynthesis; L-histidine biosynthesis; L-histidine from 5-phospho-alpha-D-ribose 1-diphosphate: step 5/9. In terms of biological role, IGPS catalyzes the conversion of PRFAR and glutamine to IGP, AICAR and glutamate. The HisF subunit catalyzes the cyclization activity that produces IGP and AICAR from PRFAR using the ammonia provided by the HisH subunit. This Psychrobacter arcticus (strain DSM 17307 / VKM B-2377 / 273-4) protein is Imidazole glycerol phosphate synthase subunit HisF.